Consider the following 457-residue polypeptide: Carboxypeptidase N catalytic chain (457 aa).

A signal peptide spans 1–23 (MPDLPSAFLPLLLLSKFVTPVTF). Residues 24 to 338 (RHHRYDDLVR…EALIQFLEQV (315 aa)) form the Peptidase M14 domain. A disulfide bridge links C42 with C104. Positions 86, 89, and 216 each coordinate Zn(2+). C271 and C311 are oxidised to a cystine. Residue E308 is the Proton donor/acceptor of the active site. 3 O-linked (GalNAc...) threonine glycosylation sites follow: T400, T402, and T409. The segment at 418–457 (STTQVHPVQKAPGRGQGSRAKQPRTSRKKDQAAKRHRGPA) is disordered.

This sequence belongs to the peptidase M14 family. In terms of assembly, tetramer of two catalytic chains and two glycosylated inactive chains. Zn(2+) serves as cofactor. In terms of tissue distribution, plasma. Expressed in liver.

It localises to the secreted. The protein resides in the extracellular space. It catalyses the reaction Release of a C-terminal basic amino acid, preferentially lysine.. Its function is as follows. Protects the body from potent vasoactive and inflammatory peptides containing C-terminal Arg or Lys (such as kinins or anaphylatoxins) which are released into the circulation. This is Carboxypeptidase N catalytic chain (Cpn1) from Rattus norvegicus (Rat).